Here is a 217-residue protein sequence, read N- to C-terminus: Adenylate kinase (217 aa).

10–15 is a binding site for ATP; sequence GAGKGT. Residues 30-59 form an NMP region; the sequence is STGDMLRAAVKAGTPLGVEAKKVMDAGGLV. AMP is bound by residues Thr-31, Arg-36, 57–59, 85–88, and Gln-92; these read GLV and GFPR. Positions 122 to 159 are LID; that stretch reads GRRAHLASGRTYHVKYNPPKVAGKDDLTGEDLVQRDDD. ATP-binding positions include Arg-123 and 132 to 133; that span reads TY. AMP contacts are provided by Arg-156 and Arg-167. Gly-203 provides a ligand contact to ATP.

This sequence belongs to the adenylate kinase family. Monomer.

It is found in the cytoplasm. The enzyme catalyses AMP + ATP = 2 ADP. It participates in purine metabolism; AMP biosynthesis via salvage pathway; AMP from ADP: step 1/1. Its function is as follows. Catalyzes the reversible transfer of the terminal phosphate group between ATP and AMP. Plays an important role in cellular energy homeostasis and in adenine nucleotide metabolism. In Aromatoleum aromaticum (strain DSM 19018 / LMG 30748 / EbN1) (Azoarcus sp. (strain EbN1)), this protein is Adenylate kinase.